We begin with the raw amino-acid sequence, 105 residues long: Met repressor (105 aa).

It belongs to the MetJ family. As to quaternary structure, homodimer.

It is found in the cytoplasm. This regulatory protein, when combined with SAM (S-adenosylmethionine) represses the expression of the methionine regulon and of enzymes involved in SAM synthesis. The polypeptide is Met repressor (Salmonella dublin (strain CT_02021853)).